The primary structure comprises 298 residues: MGRVDPVSVVVDDGVGWSAWPAPAKLNLFLQITGRRVDGYHELQTVFRLLDWGDTIHLRVREDGQIHRIGESVTGVVEADDLVVRAAYLLKYATNVHLGADIFVEKRIPVGGGFGGGSSDAATVLLVLNALWHTRLDVAVLAALGLRLGADVPVFVHGCNAWAEGVGECLTPMILPGAAYLLLDPGVCVPTRELFLDPDLTRDASPATIGDFIAGTAFGNAFEPVLRRRESAVAGALDVLSEVGFARVTGSGSGCFVEFSTRDEAECALERLPYGLCAWVADGASRSPLLDVLKTMEF.

The active site involves Lys25. 109–119 lines the ATP pocket; sequence PVGGGFGGGSS. Asp151 is an active-site residue.

Belongs to the GHMP kinase family. IspE subfamily.

The enzyme catalyses 4-CDP-2-C-methyl-D-erythritol + ATP = 4-CDP-2-C-methyl-D-erythritol 2-phosphate + ADP + H(+). It participates in isoprenoid biosynthesis; isopentenyl diphosphate biosynthesis via DXP pathway; isopentenyl diphosphate from 1-deoxy-D-xylulose 5-phosphate: step 3/6. Its function is as follows. Catalyzes the phosphorylation of the position 2 hydroxy group of 4-diphosphocytidyl-2C-methyl-D-erythritol. The protein is 4-diphosphocytidyl-2-C-methyl-D-erythritol kinase of Xylella fastidiosa (strain 9a5c).